A 181-amino-acid chain; its full sequence is Shikimate kinase (181 aa).

Residue 17–22 (GAGKTT) coordinates ATP. Thr-21 is a binding site for Mg(2+). Substrate is bound by residues Asp-39, Arg-63, and Gly-85. Arg-122 contributes to the ATP binding site. A substrate-binding site is contributed by Arg-141.

The protein belongs to the shikimate kinase family. As to quaternary structure, monomer. The cofactor is Mg(2+).

The protein localises to the cytoplasm. It catalyses the reaction shikimate + ATP = 3-phosphoshikimate + ADP + H(+). It participates in metabolic intermediate biosynthesis; chorismate biosynthesis; chorismate from D-erythrose 4-phosphate and phosphoenolpyruvate: step 5/7. In terms of biological role, catalyzes the specific phosphorylation of the 3-hydroxyl group of shikimic acid using ATP as a cosubstrate. In Nostoc sp. (strain PCC 7120 / SAG 25.82 / UTEX 2576), this protein is Shikimate kinase.